We begin with the raw amino-acid sequence, 465 residues long: Glutamate--tRNA ligase (465 aa).

Positions 11-21 (PSPTGFIHLGN) match the 'HIGH' region motif. Over residues 120-131 (KPRYDGTWRPEP) the composition is skewed to basic and acidic residues. The disordered stretch occupies residues 120–139 (KPRYDGTWRPEPGKVLPTPP). The short motif at 243 to 247 (KMSKR) is the 'KMSKS' region element. An ATP-binding site is contributed by Lys246.

This sequence belongs to the class-I aminoacyl-tRNA synthetase family. Glutamate--tRNA ligase type 1 subfamily. As to quaternary structure, monomer.

The protein localises to the cytoplasm. It carries out the reaction tRNA(Glu) + L-glutamate + ATP = L-glutamyl-tRNA(Glu) + AMP + diphosphate. Functionally, catalyzes the attachment of glutamate to tRNA(Glu) in a two-step reaction: glutamate is first activated by ATP to form Glu-AMP and then transferred to the acceptor end of tRNA(Glu). This chain is Glutamate--tRNA ligase, found in Ralstonia nicotianae (strain ATCC BAA-1114 / GMI1000) (Ralstonia solanacearum).